A 1124-amino-acid polypeptide reads, in one-letter code: Probable leucine-rich repeat receptor-like protein kinase At2g33170 (1124 aa).

Positions 1–32 are cleaved as a signal peptide; the sequence is MGWWIFEFKKESKSMFVGVLFLLTLLVWTSES. Over 33 to 752 the chain is Extracellular; that stretch reads LNSDGQFLLE…LKAGSARRGR (720 aa). 3 N-linked (GlcNAc...) asparagine glycosylation sites follow: asparagine 72, asparagine 96, and asparagine 131. 26 LRR repeats span residues 86–109, 110–132, 134–156, 158–180, 182–205, 206–228, 230–252, 254–277, 278–300, 302–325, 326–348, 350–371, 374–397, 398–420, 422–444, 446–468, 470–491, 494–516, 518–540, 542–564, 566–588, 590–613, 614–636, 638–661, 663–686, and 687–709; these read VVTS…GGLV, NLVY…IGNC, KLEV…INKL, QLRS…IGDL, NLEE…GNLN, KLTT…IGKC, NLKL…IGML, KLQE…GNLT, SLET…IGNM, SLKK…GKLS, KVME…LSKI, ELRL…ELSK, NLAK…QNLT, SMRQ…LGLY, PLWV…ICQQ, NLIL…VLRC, SLLQ…ELCK, NLSA…IGTC, KLQR…ISKL, NLVT…IANC, MLQR…LGSL, QLEI…GNLT, HLTE…LGLL, SLQI…IGNL, LLMY…ENLS, and SLLG…QIFQ. Asparagine 192 carries an N-linked (GlcNAc...) asparagine glycan. N-linked (GlcNAc...) asparagine glycosylation is present at asparagine 275. Residue asparagine 314 is glycosylated (N-linked (GlcNAc...) asparagine). The N-linked (GlcNAc...) asparagine glycan is linked to asparagine 395. N-linked (GlcNAc...) asparagine glycosylation is present at asparagine 494. An N-linked (GlcNAc...) asparagine glycan is attached at asparagine 547. Residue asparagine 611 is glycosylated (N-linked (GlcNAc...) asparagine). N-linked (GlcNAc...) asparagine glycans are attached at residues asparagine 644, asparagine 684, asparagine 692, asparagine 697, and asparagine 710. The chain crosses the membrane as a helical span at residues 753–773; that stretch reads IIIIVSSVIGGISLLLIAIVV. Over 774-1124 the chain is Cytoplasmic; that stretch reads HFLRNPVEPT…CSDLPPPAPP (351 aa). Residues threonine 808 and threonine 816 each carry the phosphothreonine modification. The Protein kinase domain maps to 819–1100; it reads FHDSYIVGRG…TMREVVLMLI (282 aa). Residues 825–833 and lysine 847 contribute to the ATP site; that span reads VGRGACGTV. Phosphotyrosine occurs at positions 901 and 939. The active-site Proton acceptor is aspartate 952. Serine 986 is subject to Phosphoserine. 2 positions are modified to phosphotyrosine: tyrosine 994 and tyrosine 1001. Residue threonine 1002 is modified to Phosphothreonine.

It belongs to the protein kinase superfamily. Ser/Thr protein kinase family.

The protein resides in the membrane. The enzyme catalyses L-seryl-[protein] + ATP = O-phospho-L-seryl-[protein] + ADP + H(+). The catalysed reaction is L-threonyl-[protein] + ATP = O-phospho-L-threonyl-[protein] + ADP + H(+). This chain is Probable leucine-rich repeat receptor-like protein kinase At2g33170, found in Arabidopsis thaliana (Mouse-ear cress).